A 131-amino-acid chain; its full sequence is Keratin, high-sulfur matrix protein, IIIA3 (131 aa).

In terms of tissue distribution, wool.

In terms of biological role, the keratin products of mammalian epidermal derivatives such as wool and hair consist of microfibrils embedded in a rigid matrix of other proteins. The matrix proteins include the high-sulfur and high-tyrosine keratins, having molecular weights of 6-20 kDa, whereas the microfibrils contain the larger, low-sulfur keratins (40-56 kDa). This is Keratin, high-sulfur matrix protein, IIIA3 from Ovis aries (Sheep).